The following is a 414-amino-acid chain: Tyrosine--tRNA ligase (414 aa).

Residue Y38 coordinates L-tyrosine. A 'HIGH' region motif is present at residues 43 to 52; it reads PTAISLHLGN. Residues Y165 and Q169 each contribute to the L-tyrosine site. Residues 227-231 carry the 'KMSKS' region motif; that stretch reads KIGKS. K230 is a binding site for ATP. Residues 349–413 form the S4 RNA-binding domain; it reads DDLFLTLVDS…KGKKQYWVIY (65 aa).

This sequence belongs to the class-I aminoacyl-tRNA synthetase family. TyrS type 1 subfamily. In terms of assembly, homodimer.

It is found in the cytoplasm. The catalysed reaction is tRNA(Tyr) + L-tyrosine + ATP = L-tyrosyl-tRNA(Tyr) + AMP + diphosphate + H(+). Functionally, catalyzes the attachment of tyrosine to tRNA(Tyr) in a two-step reaction: tyrosine is first activated by ATP to form Tyr-AMP and then transferred to the acceptor end of tRNA(Tyr). This is Tyrosine--tRNA ligase from Mycoplasmopsis pulmonis (strain UAB CTIP) (Mycoplasma pulmonis).